Here is a 283-residue protein sequence, read N- to C-terminus: BTB/POZ domain-containing protein KCTD15 (283 aa).

Residues 1–33 (MPHRKERPSGSSLHAHGSTGTAEGGSMSRLSLT) form a disordered region. Phosphoserine occurs at positions 31, 35, and 38. Residues 56–126 (APVHIDVGGH…LRTSKLLLPD (71 aa)) form the BTB domain.

In terms of assembly, forms oligomers, predominantly homopentamers. Interacts with KCTD1, probably forming heteropentamers depending on its abundance in a cell-type dependent manner. Interacts with TFAP2A; this interaction inhibits TFAP2A transcriptional activation.

Its subcellular location is the nucleus. In terms of biological role, during embryonic development, interferes with neural crest formation. Inhibits AP2 transcriptional activity by interaction with its activation domain. In Bos taurus (Bovine), this protein is BTB/POZ domain-containing protein KCTD15 (KCTD15).